We begin with the raw amino-acid sequence, 105 residues long: Prothymosin alpha-A (105 aa).

Over residues 1–30 the composition is skewed to basic and acidic residues; the sequence is MADTKVDTSKEVSAKDLKEKKQVEEAENGK. The disordered stretch occupies residues 1 to 105; that stretch reads MADTKVDTSK…VDPKKQKTDV (105 aa). 2 stretches are compositionally biased toward acidic residues: residues 39-78 and 87-96; these read ENEE…EEAE and EDDDDDEDDV.

This sequence belongs to the pro/parathymosin family. As to expression, at the 20-somite stage (18 hpf), expressed on the dorsal side of the embryo in the developing central and peripheral nervous system (CNS and PNS), in the tail bud and the pronephric ducts. In the PNS, expressed in the otic vesicle, trigeminal ganglion and the anterior lateral line placode. Localized throughout the hindbrain, with highest expression in rhombomeres 3 and 4. In the head, expressed in the olfactory placode and in the diencephalic region. At the end of the segmentation period (20 hpf), expression begins in the newly forming endodermal pouches, and weakly in the pharyngeal arch precursor cells. During the early pharyngula period, expressed in the pectoral fin bud, the developing retina, and still present in the central nervous system and endodermal pouches. In the tail, expressed in the spinal cord and posterior lateral line precursors. Weakly expressed in the pronephric ducts, only in the corpuscles of Stanius. At 48 hpf, still expressed in the retina and brain, where expression is almost uniform. At this stage, expression is decreased in the spinal cord and is absent from the lateral line cells and pronephric ducts, but appears in the intestine and continues in the pharyngeal arches. In 72 hpf embryos, expression in the brain remains uniform but is restricted to amacrine cells in the retina. In the pharyngeal arches, expression continues to be limited to the ectodermal and endodermal covering cells.

The protein resides in the nucleus. This chain is Prothymosin alpha-A (ptmaa), found in Danio rerio (Zebrafish).